The following is a 546-amino-acid chain: Chaperonin GroEL (546 aa).

Residues 29-32 (TMGP), Lys50, 86-90 (DGTTT), Gly412, 476-478 (NAA), and Asp492 each bind ATP.

Belongs to the chaperonin (HSP60) family. In terms of assembly, forms a cylinder of 14 subunits composed of two heptameric rings stacked back-to-back. Interacts with the co-chaperonin GroES.

It is found in the cytoplasm. The catalysed reaction is ATP + H2O + a folded polypeptide = ADP + phosphate + an unfolded polypeptide.. Functionally, together with its co-chaperonin GroES, plays an essential role in assisting protein folding. The GroEL-GroES system forms a nano-cage that allows encapsulation of the non-native substrate proteins and provides a physical environment optimized to promote and accelerate protein folding. Its function is as follows. May play a protective role against the defense mechanisms generated by the infected macrophages. This Legionella micdadei (Tatlockia micdadei) protein is Chaperonin GroEL.